Reading from the N-terminus, the 347-residue chain is MRIEEDLKLGFKDVLIRPKRSTLKSRSDVELERQFTFKHSGQTWSGVPIIAANMDTVGTFEMAQALAGFDILTAVHKHYSVEEWAAFINTASADVLKHVMVSTGTSDADFEKTVQILALNPALNFVCIDVANGYSEHFVQFVAKAREAWPSKTICAGNVVTGEMCEELILSGADIVKVGIGPGSVCTTRVKTGVGYPQLSAVIECADAAHGLGGMIVSDGGCTMPGDVAKAFGGGADFVMLGGMLAGHEESGGSVVEENGEKFMLFYGMSSESAMNRHVGGVAKYRAAEGKTVKLPLRGPVGNTARDILGGLRSACTYVGASRLKELTKRTTFIRVQEQENRIFNSL.

NADP(+) is bound at residue 108–131 (ADFEKTVQILALNPALNFVCIDVA). Glycine 181 and glycine 183 together coordinate K(+). The active-site Thioimidate intermediate is cysteine 186. 216 to 239 (IVSDGGCTMPGDVAKAFGGGADFV) is an NADP(+) binding site.

It belongs to the IMPDH/GMPR family. GuaC type 1 subfamily. As to quaternary structure, homotetramer.

It carries out the reaction IMP + NH4(+) + NADP(+) = GMP + NADPH + 2 H(+). Its function is as follows. Catalyzes the irreversible NADPH-dependent deamination of GMP to IMP. It functions in the conversion of nucleobase, nucleoside and nucleotide derivatives of G to A nucleotides, and in maintaining the intracellular balance of A and G nucleotides. This is GMP reductase from Salmonella typhi.